A 346-amino-acid chain; its full sequence is UDP-N-acetylenolpyruvoylglucosamine reductase (346 aa).

In terms of domain architecture, FAD-binding PCMH-type spans 23 to 194 (FDVRAQFACR…TSVTFRLPKV (172 aa)). Arg170 is an active-site residue. Ser246 serves as the catalytic Proton donor. The active site involves Glu342.

The protein belongs to the MurB family. FAD is required as a cofactor.

It is found in the cytoplasm. The enzyme catalyses UDP-N-acetyl-alpha-D-muramate + NADP(+) = UDP-N-acetyl-3-O-(1-carboxyvinyl)-alpha-D-glucosamine + NADPH + H(+). It functions in the pathway cell wall biogenesis; peptidoglycan biosynthesis. Its function is as follows. Cell wall formation. In Paraburkholderia phytofirmans (strain DSM 17436 / LMG 22146 / PsJN) (Burkholderia phytofirmans), this protein is UDP-N-acetylenolpyruvoylglucosamine reductase.